Consider the following 1075-residue polypeptide: DNA-directed RNA polymerase subunit beta (1075 aa).

This sequence belongs to the RNA polymerase beta chain family. In terms of assembly, in plastids the minimal PEP RNA polymerase catalytic core is composed of four subunits: alpha, beta, beta', and beta''. When a (nuclear-encoded) sigma factor is associated with the core the holoenzyme is formed, which can initiate transcription.

The protein localises to the plastid. The protein resides in the chloroplast. The enzyme catalyses RNA(n) + a ribonucleoside 5'-triphosphate = RNA(n+1) + diphosphate. Functionally, DNA-dependent RNA polymerase catalyzes the transcription of DNA into RNA using the four ribonucleoside triphosphates as substrates. This Zea mays (Maize) protein is DNA-directed RNA polymerase subunit beta.